We begin with the raw amino-acid sequence, 434 residues long: F-box/LRR-repeat protein 21 (434 aa).

An F-box domain is found at 39-85 (RLDWGSLPHRVVLCVFQYLPLIDRARASSVCRRWNEVFHIPDLWRKF). 7 LRR repeats span residues 140 to 165 (LVNC…SKSH), 187 to 213 (DTPV…KMSS), 214 to 239 (CPHV…ALNY), 242 to 265 (LSDE…RIDV), 322 to 347 (GRSV…VVCA), 349 to 374 (GIQV…GLSE), and 375 to 400 (CEVS…SIME).

Part of the SCF (SKP1-CUL1-F-box) E3 ubiquitin-protein ligase complex SCF(FBXL21) composed of CUL1, SKP1, RBX1 and FBXL21. Interacts with CRY2. Interacts with CRY1. As to expression, expressed in the adenohypophysis, hypothalamus (especially in the suprachiasmatic nucleus or nuclei, SCN) and pineal, all neuroendocrine structures associated with timing and homeostasis.

The protein resides in the cytoplasm. The protein localises to the cytosol. Its subcellular location is the nucleus. The protein operates within protein modification; protein ubiquitination. Functionally, substrate-recognition component of the SCF(FBXL21) E3 ubiquitin ligase complex involved in circadian rhythm function. Plays a key role in the maintenance of both the speed and the robustness of the circadian clock oscillation. The SCF(FBXL21) complex mainly acts in the cytosol and mediates ubiquitination of CRY proteins (CRY1 and CRY2), leading to CRY proteins stabilization. The SCF(FBXL21) complex counteracts the activity of the SCF(FBXL3) complex and protects CRY proteins from degradation. Involved in the hypothalamic suprachiasmatic nucleus (SCN) clock regulating temporal organization of the daily activities. This chain is F-box/LRR-repeat protein 21 (Fbxl21), found in Ovis aries (Sheep).